The primary structure comprises 264 residues: Meiotic recombination protein REC102 (264 aa).

The protein belongs to the TOP6B-like family. As to quaternary structure, interacts with REC104; seems to form a functional unit with REC104. REC102-REC104 interacts with SKI8-SPO11 and this interaction is required for proper subcellular location of the proteins during the initiation of recombination. Interacts with MEI4, REC114 and SPO11.

The protein localises to the nucleus. Functionally, required for formation of the SPO11-mediated double-strand breaks (DSBs) that initiate meiotic recombination. May mediate the interaction between SPO11 subunits during meiosis. Also needed for homolog chromosome pairing, synaptonemal complex formation, and for the proper timing of the first meiotic division. Not required for mitosis and mitotic DNA repair mechanisms. The protein is Meiotic recombination protein REC102 of Saccharomyces cerevisiae (strain ATCC 204508 / S288c) (Baker's yeast).